The primary structure comprises 391 residues: Phosphoglycerate kinase (391 aa).

Substrate contacts are provided by residues 21-23 (DLN), R36, 59-62 (HLGR), R113, and R146. Residues K197, E319, and 345-348 (GGDT) each bind ATP.

It belongs to the phosphoglycerate kinase family. In terms of assembly, monomer.

The protein resides in the cytoplasm. The enzyme catalyses (2R)-3-phosphoglycerate + ATP = (2R)-3-phospho-glyceroyl phosphate + ADP. Its pathway is carbohydrate degradation; glycolysis; pyruvate from D-glyceraldehyde 3-phosphate: step 2/5. The sequence is that of Phosphoglycerate kinase from Stenotrophomonas maltophilia (strain K279a).